The chain runs to 197 residues: Guanylate kinase (197 aa).

Residues 9-188 (GRLVVFSAPS…AVEAVILAIS (180 aa)) form the Guanylate kinase-like domain. Residue 16–23 (APSGTGKS) participates in ATP binding.

The protein belongs to the guanylate kinase family.

Its subcellular location is the cytoplasm. It catalyses the reaction GMP + ATP = GDP + ADP. Essential for recycling GMP and indirectly, cGMP. The chain is Guanylate kinase from Chlorobium luteolum (strain DSM 273 / BCRC 81028 / 2530) (Pelodictyon luteolum).